The sequence spans 224 residues: Ribonuclease 3 (224 aa).

One can recognise an RNase III domain in the interval 4–126 (LDRLQRQISY…IIGAISLDSS (123 aa)). E39 serves as a coordination point for Mg(2+). D43 is an active-site residue. Residues D112 and E115 each coordinate Mg(2+). The active site involves E115. One can recognise a DRBM domain in the interval 153–223 (DPKTRLQEYL…AEQILTALEI (71 aa)).

The protein belongs to the ribonuclease III family. As to quaternary structure, homodimer. Requires Mg(2+) as cofactor.

The protein localises to the cytoplasm. It carries out the reaction Endonucleolytic cleavage to 5'-phosphomonoester.. Its function is as follows. Digests double-stranded RNA. Involved in the processing of primary rRNA transcript to yield the immediate precursors to the large and small rRNAs (23S and 16S). Processes some mRNAs, and tRNAs when they are encoded in the rRNA operon. Processes pre-crRNA and tracrRNA of type II CRISPR loci if present in the organism. This is Ribonuclease 3 from Mannheimia succiniciproducens (strain KCTC 0769BP / MBEL55E).